A 234-amino-acid polypeptide reads, in one-letter code: Octanoyltransferase (234 aa).

Positions 43–231 (IPTRNYFLFV…HFQELFQAEL (189 aa)) constitute a BPL/LPL catalytic domain. Residues 88–95 (RGGDITYH), 160–162 (AMG), and 173–175 (GFA) each bind substrate. Catalysis depends on Cys191, which acts as the Acyl-thioester intermediate.

The protein belongs to the LipB family.

The protein localises to the cytoplasm. The catalysed reaction is octanoyl-[ACP] + L-lysyl-[protein] = N(6)-octanoyl-L-lysyl-[protein] + holo-[ACP] + H(+). It functions in the pathway protein modification; protein lipoylation via endogenous pathway; protein N(6)-(lipoyl)lysine from octanoyl-[acyl-carrier-protein]: step 1/2. Catalyzes the transfer of endogenously produced octanoic acid from octanoyl-acyl-carrier-protein onto the lipoyl domains of lipoate-dependent enzymes. Lipoyl-ACP can also act as a substrate although octanoyl-ACP is likely to be the physiological substrate. The polypeptide is Octanoyltransferase (Christiangramia forsetii (strain DSM 17595 / CGMCC 1.15422 / KT0803) (Gramella forsetii)).